A 73-amino-acid polypeptide reads, in one-letter code: Large ribosomal subunit protein bL28 (73 aa).

This sequence belongs to the bacterial ribosomal protein bL28 family.

This chain is Large ribosomal subunit protein bL28, found in Buchnera aphidicola subsp. Cinara cedri (strain Cc).